The following is a 205-amino-acid chain: Glycerol-3-phosphate acyltransferase (205 aa).

Transmembrane regions (helical) follow at residues 4–24 (IAPGMILFAYLCGSISSAILV), 56–76 (VAVLIFDVLKGMLPVWGAYAL), 81–101 (FWLGLIAIAACLGHIWPVFFG), 112–132 (FGAIAPIGWDLTGVMAGTWLL), and 138–158 (GYSSLGAIVSALIAPFYVWWF).

This sequence belongs to the PlsY family. In terms of assembly, probably interacts with PlsX.

The protein localises to the cell inner membrane. It carries out the reaction an acyl phosphate + sn-glycerol 3-phosphate = a 1-acyl-sn-glycero-3-phosphate + phosphate. It functions in the pathway lipid metabolism; phospholipid metabolism. Functionally, catalyzes the transfer of an acyl group from acyl-phosphate (acyl-PO(4)) to glycerol-3-phosphate (G3P) to form lysophosphatidic acid (LPA). This enzyme utilizes acyl-phosphate as fatty acyl donor, but not acyl-CoA or acyl-ACP. The chain is Glycerol-3-phosphate acyltransferase from Citrobacter koseri (strain ATCC BAA-895 / CDC 4225-83 / SGSC4696).